We begin with the raw amino-acid sequence, 29 residues long: MDILTLGWVGLLGLFTYSIAMVVWGRHGM.

Residues 3-23 (ILTLGWVGLLGLFTYSIAMVV) form a helical membrane-spanning segment.

This sequence belongs to the PetN family. In terms of assembly, the 4 large subunits of the cytochrome b6-f complex are cytochrome b6, subunit IV (17 kDa polypeptide, PetD), cytochrome f and the Rieske protein, while the 4 small subunits are PetG, PetL, PetM and PetN. The complex functions as a dimer.

It is found in the cellular thylakoid membrane. Component of the cytochrome b6-f complex, which mediates electron transfer between photosystem II (PSII) and photosystem I (PSI), cyclic electron flow around PSI, and state transitions. This chain is Cytochrome b6-f complex subunit 8, found in Cyanothece sp. (strain PCC 7425 / ATCC 29141).